Reading from the N-terminus, the 194-residue chain is Adenylate kinase isoenzyme 1 (194 aa).

19–24 (GSGKGT) lines the ATP pocket. The NMP stretch occupies residues 39-68 (STGDLLRAEVSSGSERGKKLQAIMEKGELV). Residues Thr40, Arg45, 66–68 (ELV), 95–98 (GYPR), and Gln102 each bind AMP. Residues 132 to 142 (KRGETSGRVDD) are LID. ATP is bound at residue Arg133. AMP-binding residues include Arg139 and Arg150. Residue Gly178 coordinates ATP.

This sequence belongs to the adenylate kinase family. AK1 subfamily. As to quaternary structure, monomer. Requires Mg(2+) as cofactor. As to expression, skeletal muscle.

Its subcellular location is the cytoplasm. The catalysed reaction is a ribonucleoside 5'-phosphate + ATP = a ribonucleoside 5'-diphosphate + ADP. It catalyses the reaction AMP + ATP = 2 ADP. The enzyme catalyses dAMP + ATP = dADP + ADP. It carries out the reaction dATP + AMP = dADP + ADP. The catalysed reaction is dAMP + dATP = 2 dADP. It catalyses the reaction a 2'-deoxyribonucleoside 5'-diphosphate + ATP = a 2'-deoxyribonucleoside 5'-triphosphate + ADP. The enzyme catalyses a ribonucleoside 5'-diphosphate + ATP = a ribonucleoside 5'-triphosphate + ADP. It carries out the reaction CDP + GTP = CTP + GDP. The catalysed reaction is GDP + ATP = GTP + ADP. It catalyses the reaction UDP + ATP = UTP + ADP. The enzyme catalyses GTP + UDP = UTP + GDP. It carries out the reaction dTDP + GTP = dTTP + GDP. The catalysed reaction is dCDP + GTP = dCTP + GDP. It catalyses the reaction dGDP + ATP = dGTP + ADP. The enzyme catalyses dADP + GTP = dATP + GDP. It carries out the reaction thiamine diphosphate + ADP = thiamine triphosphate + AMP. In terms of biological role, catalyzes the reversible transfer of the terminal phosphate group between ATP and AMP. Also displays broad nucleoside diphosphate kinase activity. Plays an important role in cellular energy homeostasis and in adenine nucleotide metabolism. Also catalyzes at a very low rate the synthesis of thiamine triphosphate (ThTP) from thiamine diphosphate (ThDP) and ADP. The protein is Adenylate kinase isoenzyme 1 of Gallus gallus (Chicken).